We begin with the raw amino-acid sequence, 211 residues long: Prolactin-1 (211 aa).

The first 23 residues, 1–23, serve as a signal peptide directing secretion; that stretch reads MARRSQGTKLHLAVLCLVVSCHA. Intrachain disulfides connect Cys-69/Cys-184 and Cys-201/Cys-211.

Belongs to the somatotropin/prolactin family.

Its subcellular location is the secreted. The polypeptide is Prolactin-1 (prl1) (Oncorhynchus keta (Chum salmon)).